A 440-amino-acid chain; its full sequence is Chromosome partition protein MukF (440 aa).

Residues 208-236 form a leucine-zipper region; it reads LSETSGTLRELQDTLEAAGDKLQANLLRI.

Belongs to the MukF family. As to quaternary structure, interacts, and probably forms a ternary complex, with MukE and MukB via its C-terminal region. The complex formation is stimulated by calcium or magnesium. It is required for an interaction between MukE and MukB.

The protein resides in the cytoplasm. The protein localises to the nucleoid. In terms of biological role, involved in chromosome condensation, segregation and cell cycle progression. May participate in facilitating chromosome segregation by condensation DNA from both sides of a centrally located replisome during cell division. Not required for mini-F plasmid partitioning. Probably acts via its interaction with MukB and MukE. Overexpression results in anucleate cells. It has a calcium binding activity. The polypeptide is Chromosome partition protein MukF (Photorhabdus laumondii subsp. laumondii (strain DSM 15139 / CIP 105565 / TT01) (Photorhabdus luminescens subsp. laumondii)).